A 506-amino-acid polypeptide reads, in one-letter code: Putative transporter SVOPL (506 aa).

Helical transmembrane passes span 57–77 (SIGF…ANIV), 104–124 (ALVS…CGYI), 133–153 (VVFG…FSTS), 190–210 (LLPL…VLGM), 220–240 (WMIR…MFIP), 297–317 (TSLL…GSVL), 362–382 (LISC…LNIV), 397–417 (FFFM…LLFL), 444–464 (IGMG…PFIA), and 472–492 (VILA…GVFF).

This sequence belongs to the major facilitator superfamily.

Its subcellular location is the membrane. This is Putative transporter SVOPL (svopl) from Danio rerio (Zebrafish).